Reading from the N-terminus, the 198-residue chain is MAKILVLYYSMYGHIETMAHAVADGANRVDGVEVVVKRVPETMQAEAFAKAGGKTQNAPVATPQELAEYDAIIFGTPTRFGNMSGQMRTFLDQTGGLWASGALYGKIASVFSSTGTGGGQEQTITSTWTTLAHHGMIIVPIGYGAQELFDISQVRGGTPYGATTIAGGDGSRQPSEEELAIARYQGEHVAKLAVKVHG.

In terms of domain architecture, Flavodoxin-like spans 4–189 (ILVLYYSMYG…AIARYQGEHV (186 aa)). FMN is bound by residues 10 to 15 (SMYGHI) and 78 to 80 (TRF). Residue Tyr-12 participates in NAD(+) binding. Trp-98 provides a ligand contact to substrate. FMN is bound by residues 113 to 118 (STGTGG) and His-133.

This sequence belongs to the WrbA family. Requires FMN as cofactor.

The catalysed reaction is a quinone + NADH + H(+) = a quinol + NAD(+). It catalyses the reaction a quinone + NADPH + H(+) = a quinol + NADP(+). This chain is NAD(P)H dehydrogenase (quinone), found in Klebsiella pneumoniae (strain 342).